The primary structure comprises 194 residues: Interleukin-17C (194 aa).

Positions 1-16 are cleaved as a signal peptide; the sequence is MSLLLLGWLPTGMTHQ. Cystine bridges form between cysteine 125–cysteine 185 and cysteine 130–cysteine 187.

This sequence belongs to the IL-17 family. Binds to a heterodimer formed by IL17RA and IL17RE. Expressed by epithelial cells after bacterial challenge. Low expression, if any, in lymphocytes.

It localises to the secreted. Its function is as follows. Cytokine that plays a crucial role in innate immunity of the epithelium, including to intestinal bacterial pathogens, in an autocrine manner. Stimulates the production of antibacterial peptides and pro-inflammatory molecules for host defense by signaling through the NFKB and MAPK pathways. Acts synergically with IL22, TNF and IL1B in inducing antibacterial peptides. May have protective function by maintaining epithelial homeostasis after an inflammatory challenge, such as that caused in the intestine by dextran sulfate sodium in a colitis model. May also promote an inflammatory phenotype, such as skin in a psoriasis model. Enhanced IL17C/IL17RE signaling may also lead to greater susceptibility to autoimmune diseases, such as autoimmune encephalitis. The polypeptide is Interleukin-17C (Il17c) (Mus musculus (Mouse)).